Consider the following 332-residue polypeptide: Heat-inducible transcription repressor HrcA (332 aa).

The protein belongs to the HrcA family.

Its function is as follows. Negative regulator of class I heat shock genes (grpE-dnaK-dnaJ and groELS operons). Prevents heat-shock induction of these operons. The chain is Heat-inducible transcription repressor HrcA from Mycoplasma mobile (strain ATCC 43663 / 163K / NCTC 11711) (Mesomycoplasma mobile).